We begin with the raw amino-acid sequence, 71 residues long: SRY-related protein LG28 (71 aa).

The segment at residues 1 to 68 (VKRPMNAFMV…KHMADYPDYK (68 aa)) is a DNA-binding region (HMG box).

It localises to the nucleus. The sequence is that of SRY-related protein LG28 from Eublepharis macularius (Leopard gecko).